The primary structure comprises 378 residues: UPF0754 membrane protein BCA_0919 (378 aa).

The next 2 membrane-spanning stretches (helical) occupy residues Met-1–Thr-21 and Tyr-357–Leu-377.

It belongs to the UPF0754 family.

Its subcellular location is the cell membrane. This is UPF0754 membrane protein BCA_0919 from Bacillus cereus (strain 03BB102).